We begin with the raw amino-acid sequence, 476 residues long: Cyclase-associated protein 1 (476 aa).

2 disordered regions span residues 224-262 (KPAS…KQGM) and 277-319 (GLRK…PPKM). Positions 231–243 (KGPPGAPAPPPAP) are enriched in pro residues. Low complexity predominate over residues 246–256 (SAESSKPSSSS). The segment covering 280-293 (KVTDDMKTKNRADR) has biased composition (basic and acidic residues). One can recognise a C-CAP/cofactor C-like domain in the interval 316 to 453 (PPKMELQMGR…PDGDWVEHAL (138 aa)).

Belongs to the CAP family. In terms of tissue distribution, expressed in roots, cotyledons, leaves, stems, flowers, pollen and shoots. Not detected in siliques.

In terms of biological role, actin monomer binding protein that accelerates the exchange of ADP for ATP. Regulates the pool of unpolymerized ATP-actin. Key intermediate between actin-depolymerizing factor (ADF)-mediated disassembly and the profilin-based nucleation and elongation machinery. This Arabidopsis thaliana (Mouse-ear cress) protein is Cyclase-associated protein 1 (CAP1).